Here is a 196-residue protein sequence, read N- to C-terminus: Proteasome subunit beta 1 (196 aa).

Residues 1-6 constitute a propeptide, removed in mature form; by autocatalysis; it reads MEKKTG. Thr7 serves as the catalytic Nucleophile.

Belongs to the peptidase T1B family. In terms of assembly, the 20S proteasome core is composed of 14 alpha and 14 beta subunits that assemble into four stacked heptameric rings, resulting in a barrel-shaped structure. The two inner rings, each composed of seven catalytic beta subunits, are sandwiched by two outer rings, each composed of seven alpha subunits. The catalytic chamber with the active sites is on the inside of the barrel. Has a gated structure, the ends of the cylinder being occluded by the N-termini of the alpha-subunits. Is capped at one or both ends by the proteasome regulatory ATPase, PAN.

Its subcellular location is the cytoplasm. The catalysed reaction is Cleavage of peptide bonds with very broad specificity.. With respect to regulation, the formation of the proteasomal ATPase PAN-20S proteasome complex, via the docking of the C-termini of PAN into the intersubunit pockets in the alpha-rings, triggers opening of the gate for substrate entry. Interconversion between the open-gate and close-gate conformations leads to a dynamic regulation of the 20S proteasome proteolysis activity. Its function is as follows. Component of the proteasome core, a large protease complex with broad specificity involved in protein degradation. This is Proteasome subunit beta 1 from Pyrococcus furiosus (strain ATCC 43587 / DSM 3638 / JCM 8422 / Vc1).